Consider the following 190-residue polypeptide: Peptidoglycan recognition protein 1 (190 aa).

Residues 1–21 form the signal peptide; the sequence is MSRRYTPLAWVLLALLGLGAA. Gln22 is subject to Pyrrolidone carboxylic acid. 3 disulfides stabilise this stretch: Cys24–Cys148, Cys40–Cys85, and Cys61–Cys67. The N-acetylmuramoyl-L-alanine amidase domain maps to 46–174; it reads QPVRYVVVSH…RDVQQTLSPG (129 aa).

It belongs to the N-acetylmuramoyl-L-alanine amidase 2 family. As to quaternary structure, homodimer; disulfide-linked.

The protein resides in the secreted. Its subcellular location is the cytoplasmic granule. Innate immunity protein that plays several important functions in antimicrobial and antitumor defense systems. Acts as a pattern receptor that binds to murein peptidoglycans (PGN) of Gram-positive bacteria and thus provides bactericidal activity. Forms an equimolar complex with heat shock protein HSPA1A and induces programmed cell death through apoptosis and necroptosis in tumor cell lines by activating the TNFR1 receptor on the target cell membrane. In addition, acts in complex with the Ca(2+)-binding protein S100A4 as a chemoattractant able to induce lymphocyte movement. Mechanistically, this complex acts as a ligand of the chemotactic receptors CCR5 and CXCR3 which are present on the cells of the immune system. Promotes also the activation of lymphocytes that become able to kill virus-infected cells as well as tumor cells by modulating the spectrum of their target-cell specificity. Induction of cytotoxicity on monocyte surface requires interaction with TREM1 receptor. The protein is Peptidoglycan recognition protein 1 (PGLYRP1) of Bos indicus (Zebu).